Here is a 68-residue protein sequence, read N- to C-terminus: uncharacterized protein (68 aa).

This is an uncharacterized protein from Haemophilus influenzae (strain ATCC 51907 / DSM 11121 / KW20 / Rd).